Consider the following 360-residue polypeptide: Phospho-N-acetylmuramoyl-pentapeptide-transferase (360 aa).

The Periplasmic portion of the chain corresponds to 1-25; that stretch reads MLVWLAEHLVKYYSGFNVFSYLTFR. A helical transmembrane segment spans residues 26-46; that stretch reads AIVSLLTALFISLWMGPRMIA. The Cytoplasmic segment spans residues 47–71; sequence HLQKLSFGQVVRNDGPESHFSKRGT. A helical membrane pass occupies residues 72-92; that stretch reads PTMGGIMILTAIVISVLLWAY. Position 93 (Pro-93) is a topological domain, periplasmic. A helical membrane pass occupies residues 94–114; sequence SNPYVWCVLVVLVGYGIIGFV. Over 115-131 the chain is Cytoplasmic; sequence DDYRKVVRKDTKGLIAR. Residues 132–152 traverse the membrane as a helical segment; the sequence is WKYFWMSVIALGVAFALYLAG. Topologically, residues 153–167 are periplasmic; sequence KDTPATQLVVPFFKD. Residues 168–188 form a helical membrane-spanning segment; that stretch reads VMPQLGLFYILLAYFVIVGTG. At 189 to 198 the chain is on the cytoplasmic side; the sequence is NAVNLTDGLD. The helical transmembrane segment at 199-219 threads the bilayer; sequence GLAIMPTVFVAGGFALVAWAT. The Periplasmic segment spans residues 220 to 235; sequence GNMNFASYLHIPYLRH. A helical membrane pass occupies residues 236–256; sequence AGELVIVCTAIVGAGLGFLWF. The Cytoplasmic portion of the chain corresponds to 257–262; the sequence is NTYPAQ. The helical transmembrane segment at 263-283 threads the bilayer; that stretch reads VFMGDVGSLALGGALGIIAVL. Topologically, residues 284–287 are periplasmic; the sequence is LRQE. A helical membrane pass occupies residues 288 to 308; it reads FLLVIMGGVFVVETLSVILQV. Topologically, residues 309–337 are cytoplasmic; sequence GSFKLRGQRIFRMAPIHHHYELKGWPEPR. The helical transmembrane segment at 338–358 threads the bilayer; it reads VIVRFWIISLMLVLIGLATLK. Topologically, residues 359-360 are periplasmic; sequence VR.

The protein belongs to the glycosyltransferase 4 family. MraY subfamily. Requires Mg(2+) as cofactor.

Its subcellular location is the cell inner membrane. It carries out the reaction UDP-N-acetyl-alpha-D-muramoyl-L-alanyl-gamma-D-glutamyl-meso-2,6-diaminopimeloyl-D-alanyl-D-alanine + di-trans,octa-cis-undecaprenyl phosphate = di-trans,octa-cis-undecaprenyl diphospho-N-acetyl-alpha-D-muramoyl-L-alanyl-D-glutamyl-meso-2,6-diaminopimeloyl-D-alanyl-D-alanine + UMP. Its pathway is cell wall biogenesis; peptidoglycan biosynthesis. Its function is as follows. Catalyzes the initial step of the lipid cycle reactions in the biosynthesis of the cell wall peptidoglycan: transfers peptidoglycan precursor phospho-MurNAc-pentapeptide from UDP-MurNAc-pentapeptide onto the lipid carrier undecaprenyl phosphate, yielding undecaprenyl-pyrophosphoryl-MurNAc-pentapeptide, known as lipid I. The chain is Phospho-N-acetylmuramoyl-pentapeptide-transferase from Escherichia coli O7:K1 (strain IAI39 / ExPEC).